We begin with the raw amino-acid sequence, 162 residues long: Regulator of ribonuclease activity A (162 aa).

This sequence belongs to the RraA family. As to quaternary structure, homotrimer. Binds to both RNA-binding sites in the C-terminal region of Rne and to RhlB.

It is found in the cytoplasm. Its function is as follows. Globally modulates RNA abundance by binding to RNase E (Rne) and regulating its endonucleolytic activity. Can modulate Rne action in a substrate-dependent manner by altering the composition of the degradosome. Modulates RNA-binding and helicase activities of the degradosome. This Haemophilus influenzae (strain ATCC 51907 / DSM 11121 / KW20 / Rd) protein is Regulator of ribonuclease activity A.